The primary structure comprises 195 residues: ATP-dependent Clp protease proteolytic subunit 1 (195 aa).

Ser-96 serves as the catalytic Nucleophile. His-121 is a catalytic residue.

The protein belongs to the peptidase S14 family. Fourteen ClpP subunits assemble into 2 heptameric rings which stack back to back to give a disk-like structure with a central cavity, resembling the structure of eukaryotic proteasomes.

Its subcellular location is the cytoplasm. The catalysed reaction is Hydrolysis of proteins to small peptides in the presence of ATP and magnesium. alpha-casein is the usual test substrate. In the absence of ATP, only oligopeptides shorter than five residues are hydrolyzed (such as succinyl-Leu-Tyr-|-NHMec, and Leu-Tyr-Leu-|-Tyr-Trp, in which cleavage of the -Tyr-|-Leu- and -Tyr-|-Trp bonds also occurs).. Its function is as follows. Cleaves peptides in various proteins in a process that requires ATP hydrolysis. Has a chymotrypsin-like activity. Plays a major role in the degradation of misfolded proteins. This chain is ATP-dependent Clp protease proteolytic subunit 1, found in Prochlorococcus marinus (strain MIT 9312).